The primary structure comprises 603 residues: Insulin-like growth factor-binding protein complex acid labile subunit (603 aa).

The N-terminal stretch at 1 to 23 (MALRTGSPALVVLLAFWVALGPC) is a signal peptide. Positions 32 to 74 (ASADAEGPQCPVTCTCSYDDYTDELSVFCSSRNLTQLPDGIPV) constitute an LRRNT domain. Cystine bridges form between Cys41-Cys47 and Cys45-Cys60. Residues Asn64, Asn85, and Asn96 are each glycosylated (N-linked (GlcNAc...) asparagine). 19 LRR repeats span residues 75 to 96 (STRALWLDGNNLSSIPSAAFQN), 99 to 120 (SLDFLNLQGSWLRSLEPQALLG), 123 to 144 (NLYHLHLERNLLRSLAAGLFRH), 147 to 168 (SLASLSLGNNLLGRLEEGLFRG), 171 to 192 (HLWDLNLGWNSLVVLPDTVFQG), 195 to 216 (NLHELVLAGNKLTYLQPALLCG), 219 to 240 (ELRELDLSRNALRSVKANVFIH), 243 to 264 (RLQKLYLDRNLITAVAPRAFLG), 267 to 288 (ALRWLDLSHNRVAGLLEDTFPG), 291 to 312 (GLHVLRLAHNAITSLRPRTFKD), 315 to 336 (FLEELQLGHNRIRQLGEKTFEG), 339 to 360 (QLEVLTLNDNQIHEVKVGAFFG), 363 to 384 (NVAVMNLSGNCLRSLPEHVFQG), 387 to 408 (RLHSLHLEHSCLGRIRLHTFAG), 411 to 432 (GLRRLFLRDNSISSIEEQSLAG), 435 to 456 (ELLELDLTANQLTHLPRQLFQG), 459 to 480 (QLEYLLLSNNQLTMLSEDVLGP), 483 to 504 (RAFWLDLSHNRLETPAEGLFSS), and 507 to 528 (RLRYLNLRNNSLQTFVPQPGLE). An N-linked (GlcNAc...) asparagine glycan is attached at Asn368. Asn515 is a glycosylation site (N-linked (GlcNAc...) asparagine). The region spanning 535–603 (NPWDCSCPLK…DISETLFVHC (69 aa)) is the LRRCT domain. 3 disulfides stabilise this stretch: Cys539–Cys581, Cys541–Cys603, and Cys565–Cys570. N-linked (GlcNAc...) asparagine glycosylation is found at Asn578 and Asn586.

In terms of assembly, forms a ternary complex with IGF1 and IGFBP3.

It is found in the secreted. Its subcellular location is the extracellular space. In terms of biological role, may have an important role in regulating the access of circulating IGFs to the tissues. This chain is Insulin-like growth factor-binding protein complex acid labile subunit (Igfals), found in Mus musculus (Mouse).